We begin with the raw amino-acid sequence, 217 residues long: Peroxiredoxin (217 aa).

Residues 2–159 (VVIGEKFPEV…VVRLVKALQT (158 aa)) enclose the Thioredoxin domain. C46 serves as the catalytic Cysteine sulfenic acid (-SOH) intermediate. Residue R122 coordinates substrate.

This sequence belongs to the peroxiredoxin family. Prx6 subfamily. In terms of assembly, homodecamer. Pentamer of dimers that assemble into a ring structure.

The protein localises to the cytoplasm. The catalysed reaction is a hydroperoxide + [thioredoxin]-dithiol = an alcohol + [thioredoxin]-disulfide + H2O. In terms of biological role, thiol-specific peroxidase that catalyzes the reduction of hydrogen peroxide and organic hydroperoxides to water and alcohols, respectively. Plays a role in cell protection against oxidative stress by detoxifying peroxides. The protein is Peroxiredoxin of Methanococcus maripaludis (strain C5 / ATCC BAA-1333).